A 188-amino-acid polypeptide reads, in one-letter code: Peptidyl-tRNA hydrolase (188 aa).

Tyr-14 is a tRNA binding site. His-19 serves as the catalytic Proton acceptor. Positions 64, 66, and 112 each coordinate tRNA.

The protein belongs to the PTH family. In terms of assembly, monomer.

The protein localises to the cytoplasm. The enzyme catalyses an N-acyl-L-alpha-aminoacyl-tRNA + H2O = an N-acyl-L-amino acid + a tRNA + H(+). Its function is as follows. Hydrolyzes ribosome-free peptidyl-tRNAs (with 1 or more amino acids incorporated), which drop off the ribosome during protein synthesis, or as a result of ribosome stalling. Catalyzes the release of premature peptidyl moieties from peptidyl-tRNA molecules trapped in stalled 50S ribosomal subunits, and thus maintains levels of free tRNAs and 50S ribosomes. The protein is Peptidyl-tRNA hydrolase of Clostridium perfringens (strain ATCC 13124 / DSM 756 / JCM 1290 / NCIMB 6125 / NCTC 8237 / Type A).